We begin with the raw amino-acid sequence, 114 residues long: uncharacterized protein (114 aa).

Positions 6–114 constitute an HIT domain; that stretch reads IFGKIIRREI…GGRSLAWPPG (109 aa). Positions 98–102 match the Histidine triad motif motif; sequence HLHIH.

This is an uncharacterized protein from Synechococcus elongatus (strain ATCC 33912 / PCC 7942 / FACHB-805) (Anacystis nidulans R2).